A 287-amino-acid polypeptide reads, in one-letter code: MAAKILDGKAIAQKVRDEVREGVARFVAAHGRPPGLEVVLVGEDPASVTHTRSKERMSNEVGIRGRLRALPAATTEAELLACVAELDADDTVDGILVQLPLPARIRAHAVLDAIDPAKDVDGLHPVNAGLLAMGRPGGIAPCTPVGCMRLLAEAGVELAGARAVVVGRSNLVGRPMAQLLLARHATVAIAHTRTRDLKALCREADVLVVAAGKAKLIGGDWIKEGATVIDVGMNRDDAGKLVGDVDFDAVRERAAWITPVPGGVGPMTIASLLETTLRAAEARVAKR.

NADP(+) is bound by residues 167–169 (GRS) and threonine 192.

The protein belongs to the tetrahydrofolate dehydrogenase/cyclohydrolase family. In terms of assembly, homodimer.

The enzyme catalyses (6R)-5,10-methylene-5,6,7,8-tetrahydrofolate + NADP(+) = (6R)-5,10-methenyltetrahydrofolate + NADPH. It carries out the reaction (6R)-5,10-methenyltetrahydrofolate + H2O = (6R)-10-formyltetrahydrofolate + H(+). It participates in one-carbon metabolism; tetrahydrofolate interconversion. Functionally, catalyzes the oxidation of 5,10-methylenetetrahydrofolate to 5,10-methenyltetrahydrofolate and then the hydrolysis of 5,10-methenyltetrahydrofolate to 10-formyltetrahydrofolate. This is Bifunctional protein FolD from Sorangium cellulosum (strain So ce56) (Polyangium cellulosum (strain So ce56)).